A 116-amino-acid chain; its full sequence is Peptidyl-tRNA hydrolase (116 aa).

Belongs to the PTH2 family.

It is found in the cytoplasm. The catalysed reaction is an N-acyl-L-alpha-aminoacyl-tRNA + H2O = an N-acyl-L-amino acid + a tRNA + H(+). In terms of biological role, the natural substrate for this enzyme may be peptidyl-tRNAs which drop off the ribosome during protein synthesis. The sequence is that of Peptidyl-tRNA hydrolase (pth) from Methanococcus maripaludis (strain DSM 14266 / JCM 13030 / NBRC 101832 / S2 / LL).